Reading from the N-terminus, the 1306-residue chain is Clustered mitochondria protein homolog (1306 aa).

A compositionally biased stretch (low complexity) spans 1–11; it reads MAVNNEVNNAA. The segment at 1–47 is disordered; that stretch reads MAVNNEVNNAASETPTDVSSSSQKLATEETALTNGADHEEEDGGEAG. The span at 12–33 shows a compositional bias: polar residues; that stretch reads SETPTDVSSSSQKLATEETALT. One can recognise a Clu domain in the interval 336-580; the sequence is DITRTQENYL…RVTPLDITWM (245 aa). Disordered stretches follow at residues 630-689 and 912-956; these read ERKR…QERI and KQSQ…SPAA. Residues 656–689 are compositionally biased toward basic and acidic residues; that stretch reads EPAKSEEPTENGELAKKSESDEAAEPSKPDQERI. TPR repeat units lie at residues 1032–1065, 1074–1107, and 1116–1149; these read ARVY…SERT, LLNY…WKVV, and ITTI…CEEV. Positions 1275–1306 are disordered; it reads FIEGSDQSNQNKKRPGRSNPKRRGGAAATAGK. A compositionally biased stretch (basic residues) spans 1285 to 1298; it reads NKKRPGRSNPKRRG.

This sequence belongs to the CLU family. In terms of assembly, may associate with the eukaryotic translation initiation factor 3 (eIF-3) complex.

It localises to the cytoplasm. In terms of biological role, mRNA-binding protein involved in proper cytoplasmic distribution of mitochondria. In Botryotinia fuckeliana (strain B05.10) (Noble rot fungus), this protein is Clustered mitochondria protein homolog.